The chain runs to 197 residues: 5'-deoxynucleotidase YPTB2590 (197 aa).

Substrate is bound by residues 16–17 and His31; that span reads RW. Residues 28–140 enclose the HD domain; sequence VSEHSLQVAF…VKQADALCAY (113 aa). 3 residues coordinate a divalent metal cation: His31, His66, and Asp67. Substrate-binding positions include Asp67, 75 to 78, and Asp135; that span reads DLPT. Asp135 serves as a coordination point for a divalent metal cation.

Belongs to the 5DNU family. As to quaternary structure, homodimer. The cofactor is a divalent metal cation.

Its subcellular location is the cytoplasm. It carries out the reaction a 2'-deoxyribonucleoside 5'-phosphate + H2O = a 2'-deoxyribonucleoside + phosphate. Its function is as follows. Catalyzes the strictly specific dephosphorylation of 2'-deoxyribonucleoside 5'-monophosphates. The polypeptide is 5'-deoxynucleotidase YPTB2590 (Yersinia pseudotuberculosis serotype I (strain IP32953)).